A 176-amino-acid chain; its full sequence is MFHVSFRYIFGIPPLILVLLPVASSDCDISGKDGGAYQNVLMVNIDDLDNMINFDSNCLNNEPNFFKKHSCDDNKEASFLNRASRKLRQFLKMNISDDFKLHLSTVSQGTLTLLNCTSKGKGRKPPSLSEAQPTKNLEENKSSKEQKKQNDLCFLKILLQKIKTCWNKILRGIKEH.

The N-terminal stretch at 1–25 (MFHVSFRYIFGIPPLILVLLPVASS) is a signal peptide. 3 cysteine pairs are disulfide-bonded: C27–C165, C58–C153, and C71–C116. N-linked (GlcNAc...) asparagine glycans are attached at residues N94, N115, and N140. Residues 118–143 (SKGKGRKPPSLSEAQPTKNLEENKSS) are disordered.

This sequence belongs to the IL-7/IL-9 family. In terms of assembly, interacts with IL7R and CSF2RG.

It localises to the secreted. Hematopoietic cytokine that plays an essential role in the development, expansion, and survival of naive and memory T-cells and B-cells thereby regulating the number of mature lymphocytes and maintaining lymphoid homeostasis. Mechanistically, exerts its biological effects through a receptor composed of IL7RA subunit and the cytokine receptor common subunit gamma/CSF2RG. Binding to the receptor leads to activation of various kinases including JAK1 or JAK3 depending on the cell type and subsequently propagation of signals through activation of several downstream signaling pathways including the PI3K/Akt/mTOR or the JAK-STAT5. In Bos taurus (Bovine), this protein is Interleukin-7 (IL7).